A 165-amino-acid chain; its full sequence is Small ribosomal subunit protein uS5 (165 aa).

An S5 DRBM domain is found at 10-73 (LKEKVVSISR…EDAKKNLVEV (64 aa)).

Belongs to the universal ribosomal protein uS5 family. As to quaternary structure, part of the 30S ribosomal subunit. Contacts proteins S4 and S8.

In terms of biological role, with S4 and S12 plays an important role in translational accuracy. Functionally, located at the back of the 30S subunit body where it stabilizes the conformation of the head with respect to the body. In Clostridium perfringens (strain ATCC 13124 / DSM 756 / JCM 1290 / NCIMB 6125 / NCTC 8237 / Type A), this protein is Small ribosomal subunit protein uS5.